The following is a 429-amino-acid chain: Probable beta-1,3-galactosyl-O-glycosyl-glycoprotein beta-1,6-N-acetylglucosaminyltransferase 7 (429 aa).

At 1 to 8 (MSQLRATK) the chain is on the cytoplasmic side. A helical; Signal-anchor for type II membrane protein transmembrane segment spans residues 9–25 (PGILVCAAIGIFVFLYL). Topologically, residues 26 to 429 (RNPTSEDPEE…ESHLNRRLNP (404 aa)) are extracellular. 4 disulfide bridges follow: C53–C205, C139–C354, C160–C187, and C363–C394. An N-linked (GlcNAc...) asparagine glycan is attached at N87. A glycan (N-linked (GlcNAc...) asparagine) is linked at N272.

The protein belongs to the glycosyltransferase 14 family.

The protein localises to the golgi apparatus membrane. Its pathway is protein modification; protein glycosylation. In terms of biological role, probable glycosyltransferase. The protein is Probable beta-1,3-galactosyl-O-glycosyl-glycoprotein beta-1,6-N-acetylglucosaminyltransferase 7 of Sus scrofa (Pig).